The primary structure comprises 333 residues: Taste receptor type 2 member 38 (333 aa).

Over 1–17 (MLTLTRIHTVSYEVRST) the chain is Extracellular. The chain crosses the membrane as a helical span at residues 18-38 (FLFISVLEFAVGFLTNAFVFL). At 39–55 (VNFWDVVKRQPLSNSDC) the chain is on the cytoplasmic side. Residues 56-76 (VLLCLSISRLFLHGLLFLSAI) form a helical membrane-spanning segment. Over 77 to 94 (QLTHFQKLSEPLNHSYQA) the chain is Extracellular. Residues 95-115 (INMLWMIANQANLWLAACLSL) traverse the membrane as a helical segment. At 116-142 (LYCSKLIRFSHTFLICLASWVSRKISQ) the chain is on the cytoplasmic side. The helical transmembrane segment at 143 to 163 (MLLGIILCSCICTVLCVWCFF) threads the bilayer. At 164–190 (SRPHFTVTTVLFMNNNTRLNWQIKDLN) the chain is on the extracellular side. Residue Asn178 is glycosylated (N-linked (GlcNAc...) asparagine). The helical transmembrane segment at 191–211 (LFYSFLFCYLWSVPPFLLFLV) threads the bilayer. Over 212-251 (SSGMLTVSLGRHMRTMKVYTRDSRDPSLEAHIKALKSLVS) the chain is Cytoplasmic. A helical transmembrane segment spans residues 252–272 (FFCFFVISSCAAFISVPLLIL). At 273–276 (WRDK) the chain is on the extracellular side. The chain crosses the membrane as a helical span at residues 277-297 (IGVMVCVGIMAACPSGHAAVL). The Cytoplasmic segment spans residues 298-333 (ISGNAKLRRAVTTILLWAQSSLKVRADHKADSRTLC).

It belongs to the G-protein coupled receptor T2R family.

The protein resides in the membrane. In terms of biological role, receptor that may play a role in the perception of bitterness and is gustducin-linked. May play a role in sensing the chemical composition of the gastrointestinal content. The activity of this receptor may stimulate alpha gustducin, mediate PLC-beta-2 activation and lead to the gating of TRPM5. This chain is Taste receptor type 2 member 38 (TAS2R38), found in Pan paniscus (Pygmy chimpanzee).